A 1351-amino-acid chain; its full sequence is Serine-rich adhesin for platelets (1351 aa).

Positions 1–89 (MSKRQKEFHD…VNMLHDQQAF (89 aa)) are cleaved as a signal peptide. The tract at residues 90 to 230 (AASDAPLTSE…KTSTTSTSTA (141 aa)) is serine-rich repeat region 1, SRR1. Residues 100–111 (LNTQSETVGNQN) show a composition bias toward polar residues. Disordered stretches follow at residues 100 to 228 (LNTQ…TSTS) and 751 to 1323 (NSMS…GLLG). Low complexity-rich tracts occupy residues 112-133 (STTIEASTSTTDSTSVTKNSSS) and 149-228 (NVTS…TSTS). Positions 231–751 (PIKLRTFSRL…TTFKYEVTRN (521 aa)) are non-repeat region (NRR). Low complexity predominate over residues 752 to 1294 (SMSDSVSTSG…SQSTLSATSE (543 aa)). The serine-rich repeat region 1, SRR1 stretch occupies residues 752 to 1312 (SMSDSVSTSG…AQSEKRLPDT (561 aa)). Positions 1309–1313 (LPDTG) match the LPXTG sorting signal motif. Thr1312 carries the post-translational modification Pentaglycyl murein peptidoglycan amidated threonine. The propeptide at 1313-1351 (GDSIKQNGLLGGVMTLLVGLGLMKRKKKKDENDQDDSQA) is removed by sortase.

This sequence belongs to the serine-rich repeat protein (SRRP) family. Proteolytically cleaved by a metalloprotease. In terms of processing, glycosylated. It is probable that most of the Ser residues in SSR1 and SSR2 are O-GlcNAcylated. Sequential glycosylation by sugar transferases are able to generate complex sugar polymorphisms.

It is found in the secreted. The protein resides in the cell wall. Its function is as follows. Mediates binding to human platelets, possibly through a receptor-ligand interaction. Probably associated with virulence in endovascular infection. The sequence is that of Serine-rich adhesin for platelets (sasA) from Staphylococcus aureus (strain MRSA252).